Here is a 314-residue protein sequence, read N- to C-terminus: Phospholipid phosphatase-related protein type 5 (314 aa).

A run of 6 helical transmembrane segments spans residues 5 to 25 (FSLT…VMLA), 61 to 81 (IPPV…IIVG), 120 to 140 (FLGI…AGQV), 194 to 214 (AALS…TIKA), 223 to 243 (VLCL…VAEY), and 250 to 270 (VIAG…CVVN).

It belongs to the PA-phosphatase related phosphoesterase family.

It localises to the cell membrane. In terms of biological role, induces filopodia formation and promotes neurite growth. The chain is Phospholipid phosphatase-related protein type 5 from Xenopus laevis (African clawed frog).